The chain runs to 276 residues: HUWE1-associated protein modifying stress responses 2 (276 aa).

3 disordered regions span residues 146 to 182 (GKVP…TPVG), 204 to 238 (ISMR…PNSL), and 252 to 276 (VRKR…NRMV). Positions 149–165 (PPTPQPPRTPRMSPRPP) are enriched in pro residues. 2 stretches are compositionally biased toward low complexity: residues 166-179 (AAAS…ESGT) and 208-219 (SGPPGSSSQDGG). The segment at 252–276 (VRKRTSAQFGDGSADSPLHKRNRMV) is nuclear localization signal.

The protein belongs to the HAPSTR1 family. In terms of assembly, homooligomer. Heterooligomer with HAPSTR1; the interaction is direct and stabilizes HAPSTR1 independently of HUWE1. Interacts with HUWE1.

It localises to the nucleus. Its function is as follows. Together with HAPSTR1 plays a central regulatory role in the cellular response to molecular stressors, such as DNA damage, nutrient scarcity, and protein misfolding. Regulates these multiple stress response signaling pathways by stabilizing HAPSTR1, but also independently of HAPSTR1. In Mus musculus (Mouse), this protein is HUWE1-associated protein modifying stress responses 2.